The primary structure comprises 567 residues: Pyrethroid hydrolase Ces2e (567 aa).

An N-terminal signal peptide occupies residues 1 to 36 (MAQTRAWKSIMPLESLPGWLNAVVWGLLLLFCQVQG). Q37 is modified (pyrrolidone carboxylic acid). C105 and C132 are joined by a disulfide. The active-site Acyl-ester intermediate is S237. An intrachain disulfide couples C289 to C300. Residues E354 and H465 each act as charge relay system in the active site.

It belongs to the type-B carboxylesterase/lipase family. In terms of tissue distribution, expressed in liver.

It is found in the microsome. The enzyme catalyses all-trans-retinyl hexadecanoate + H2O = all-trans-retinol + hexadecanoate + H(+). It catalyses the reaction (-)-trans-permethrin + H2O = (3-phenoxyphenyl)methanol + (1S,3R)-3-(2,2-dichlorovinyl)-2,2-dimethylcyclopropanecarboxylate + H(+). In terms of biological role, carboxylesterase that catalyzes the hydrolysis of pyrethroids pesticides. Hydrolyzes trans-permethrin at a rate about 22-fold higher than cis-permethrin. Also hydrolyzes trans-cypermethrin. Hydrolyzes retinyl esters. This Rattus norvegicus (Rat) protein is Pyrethroid hydrolase Ces2e.